The chain runs to 499 residues: Glutamyl-tRNA(Gln) amidotransferase subunit B, chloroplastic/mitochondrial (499 aa).

It belongs to the GatB/GatE family. GatB subfamily. Subunit of the heterotrimeric GatCAB amidotransferase (AdT) complex, composed of A, B and C subunits.

Its subcellular location is the mitochondrion. The protein localises to the plastid. It localises to the chloroplast. The catalysed reaction is L-glutamyl-tRNA(Gln) + L-glutamine + ATP + H2O = L-glutaminyl-tRNA(Gln) + L-glutamate + ADP + phosphate + H(+). In terms of biological role, allows the formation of correctly charged Gln-tRNA(Gln) through the transamidation of misacylated Glu-tRNA(Gln) in chloroplasts and mitochondria. The reaction takes place in the presence of glutamine and ATP through an activated gamma-phospho-Glu-tRNA(Gln). In Ostreococcus lucimarinus (strain CCE9901), this protein is Glutamyl-tRNA(Gln) amidotransferase subunit B, chloroplastic/mitochondrial.